The sequence spans 191 residues: Inosine triphosphate pyrophosphatase (191 aa).

An ITP-binding site is contributed by 15 to 20 (TGNTNK). Glu43 lines the Mg(2+) pocket. ITP is bound by residues Lys55, 71 to 72 (DT), Lys88, 147 to 150 (FGWD), Lys168, and 173 to 174 (HR).

The protein belongs to the HAM1 NTPase family. As to quaternary structure, homodimer. It depends on Mg(2+) as a cofactor. The cofactor is Mn(2+).

Its subcellular location is the cytoplasm. It localises to the nucleus. The catalysed reaction is ITP + H2O = IMP + diphosphate + H(+). The enzyme catalyses dITP + H2O = dIMP + diphosphate + H(+). It carries out the reaction XTP + H2O = XMP + diphosphate + H(+). In terms of biological role, pyrophosphatase that hydrolyzes non-canonical purine nucleotides such as inosine triphosphate (ITP), deoxyinosine triphosphate (dITP) or xanthosine 5'-triphosphate (XTP) to their respective monophosphate derivatives. The enzyme does not distinguish between the deoxy- and ribose forms. Probably excludes non-canonical purines from RNA and DNA precursor pools, thus preventing their incorporation into RNA and DNA and avoiding chromosomal lesions. The sequence is that of Inosine triphosphate pyrophosphatase from Chaetomium globosum (strain ATCC 6205 / CBS 148.51 / DSM 1962 / NBRC 6347 / NRRL 1970) (Soil fungus).